A 237-amino-acid chain; its full sequence is UPF0502 protein RB6530 (237 aa).

A compositionally biased stretch (polar residues) spans 187–202 (ASSAAPSQAESGSTSP). The interval 187-211 (ASSAAPSQAESGSTSPAKAANDDRI) is disordered.

The protein belongs to the UPF0502 family.

This is UPF0502 protein RB6530 from Rhodopirellula baltica (strain DSM 10527 / NCIMB 13988 / SH1).